The chain runs to 640 residues: DNA mismatch repair protein MutL (640 aa).

2 disordered regions span residues 332–353 (PNVQ…FNFP) and 408–431 (PAHT…TFHD).

This sequence belongs to the DNA mismatch repair MutL/HexB family.

Its function is as follows. This protein is involved in the repair of mismatches in DNA. It is required for dam-dependent methyl-directed DNA mismatch repair. May act as a 'molecular matchmaker', a protein that promotes the formation of a stable complex between two or more DNA-binding proteins in an ATP-dependent manner without itself being part of a final effector complex. This chain is DNA mismatch repair protein MutL, found in Chloroherpeton thalassium (strain ATCC 35110 / GB-78).